The following is a 218-amino-acid chain: uncharacterized protein (218 aa).

Residues 7–123 (RVALADDQPL…ELIDAIRAAA (117 aa)) enclose the Response regulatory domain. A 4-aspartylphosphate modification is found at Asp58. The region spanning 150–215 (AEELAEPFTK…QAVVFAIRNG (66 aa)) is the HTH luxR-type domain. The segment at residues 174–193 (NEDIAEKLFVSESTVKTHVH) is a DNA-binding region (H-T-H motif).

In terms of processing, phosphorylated by YxjM.

The protein resides in the cytoplasm. Its function is as follows. Probable member of the two-component regulatory system YxjM/YxjL. This is an uncharacterized protein from Bacillus subtilis (strain 168).